The sequence spans 421 residues: Glucan 1,3-beta-glucosidase (421 aa).

Positions M1–A15 are cleaved as a signal peptide. The active-site Proton donor is the E213. Disulfide bonds link C296–C419 and C321–C347. The active-site Nucleophile is E313.

It belongs to the glycosyl hydrolase 5 (cellulase A) family.

It is found in the secreted. The enzyme catalyses Successive hydrolysis of beta-D-glucose units from the non-reducing ends of (1-&gt;3)-beta-D-glucans, releasing alpha-glucose.. This is Glucan 1,3-beta-glucosidase (EXG1) from Yarrowia lipolytica (strain CLIB 122 / E 150) (Yeast).